The primary structure comprises 166 residues: Interferon gamma (166 aa).

Positions Met-1 to Gly-23 are cleaved as a signal peptide. A Pyrrolidone carboxylic acid modification is found at Gln-24. Residues Asn-39 and Asn-106 are each glycosylated (N-linked (GlcNAc...) asparagine).

The protein belongs to the type II (or gamma) interferon family. In terms of assembly, homodimer. Interacts with IFNGR1 (via extracellular domain); this interaction promotes IFNGR1 dimerization. Released primarily from activated T lymphocytes.

It localises to the secreted. In terms of biological role, type II interferon produced by immune cells such as T-cells and NK cells that plays crucial roles in antimicrobial, antiviral, and antitumor responses by activating effector immune cells and enhancing antigen presentation. Primarily signals through the JAK-STAT pathway after interaction with its receptor IFNGR1 to affect gene regulation. Upon IFNG binding, IFNGR1 intracellular domain opens out to allow association of downstream signaling components JAK2, JAK1 and STAT1, leading to STAT1 activation, nuclear translocation and transcription of IFNG-regulated genes. Many of the induced genes are transcription factors such as IRF1 that are able to further drive regulation of a next wave of transcription. Plays a role in class I antigen presentation pathway by inducing a replacement of catalytic proteasome subunits with immunoproteasome subunits. In turn, increases the quantity, quality, and repertoire of peptides for class I MHC loading. Increases the efficiency of peptide generation also by inducing the expression of activator PA28 that associates with the proteasome and alters its proteolytic cleavage preference. Up-regulates as well MHC II complexes on the cell surface by promoting expression of several key molecules such as cathepsins B/CTSB, H/CTSH, and L/CTSL. Participates in the regulation of hematopoietic stem cells during development and under homeostatic conditions by affecting their development, quiescence, and differentiation. The chain is Interferon gamma (IFNG) from Bos indicus (Zebu).